The following is a 110-amino-acid chain: U32-theraphotoxin-Cg1a (110 aa).

An N-terminal signal peptide occupies residues 1-19 (MNHCFLILFTLIVFTVVWS). Positions 20–43 (LEENEEYPDEDEMIESFMDGYSYR) are excised as a propeptide. 4 disulfides stabilise this stretch: Cys49–Cys63, Cys56–Cys69, Cys60–Cys105, and Cys62–Cys80.

This sequence belongs to the neurotoxin 03 (Tx2) family. 02 subfamily. In terms of tissue distribution, expressed by the venom gland.

It localises to the secreted. Functionally, probable ion channel inhibitor. The polypeptide is U32-theraphotoxin-Cg1a (Chilobrachys guangxiensis (Chinese earth tiger tarantula)).